The chain runs to 553 residues: Interleukin-20 receptor subunit alpha (553 aa).

Positions 1–29 are cleaved as a signal peptide; the sequence is MRAPGRPALRPLPLPPLLLLLLAAPWGRA. Over 30 to 250 the chain is Extracellular; that stretch reads VPCVSGGLPK…KDQSSEFKAK (221 aa). 2 consecutive Fibronectin type-III domains span residues 37-135 and 136-242; these read LPKP…FLET and QIGP…TLKD. N-linked (GlcNAc...) asparagine glycosylation is found at N42, N83, N91, N182, N191, and N200. Cysteines 87 and 95 form a disulfide. The cysteines at positions 215 and 236 are disulfide-linked. Residues 251–271 form a helical membrane-spanning segment; sequence IIFWYVLPVSITVFLFSVMGY. The Cytoplasmic portion of the chain corresponds to 272–553; that stretch reads SIYRYIHVGK…EWGLYVQMEN (282 aa). Disordered regions lie at residues 333–353 and 462–515; these read SSDV…PPQE and QEHT…LGEE. A compositionally biased stretch (polar residues) spans 334–346; that stretch reads SDVSSLNDPQPSG. A compositionally biased stretch (acidic residues) spans 499–513; it reads QDSEGCEPSEGDGLG.

Belongs to the type II cytokine receptor family. As to quaternary structure, heterodimer with IL20RB and heterodimer with IL10RB. Widely expressed with highest levels in skin and testis and high levels in brain. Highly expressed in psoriatic skin.

Its subcellular location is the membrane. The IL20RA/IL20RB dimer is a receptor for IL19, IL20 and IL24. The IL20RA/IL10RB dimer is a receptor for IL26. The protein is Interleukin-20 receptor subunit alpha (IL20RA) of Homo sapiens (Human).